A 311-amino-acid polypeptide reads, in one-letter code: Malate dehydrogenase (311 aa).

Residues 7–13 and Asp34 each bind NAD(+); that span reads GAAGGIG. Arg81 and Arg87 together coordinate substrate. Residues Asn94 and 117–119 each bind NAD(+); that span reads ITN. Substrate contacts are provided by Asn119 and Arg153. The active-site Proton acceptor is the His177. Met227 lines the NAD(+) pocket.

Belongs to the LDH/MDH superfamily. MDH type 1 family. As to quaternary structure, homodimer.

The enzyme catalyses (S)-malate + NAD(+) = oxaloacetate + NADH + H(+). Catalyzes the reversible oxidation of malate to oxaloacetate. This is Malate dehydrogenase from Shewanella loihica (strain ATCC BAA-1088 / PV-4).